Here is a 660-residue protein sequence, read N- to C-terminus: U-box domain-containing protein 13 (660 aa).

A disordered region spans residues 227–252 (DDNGEEQKVGVNSRSNGQTSTAASQK). The span at 236–250 (GVNSRSNGQTSTAAS) shows a compositional bias: polar residues. One can recognise a U-box domain in the interval 255-329 (VIPDDFRCPI…AQWCEANDIE (75 aa)). ARM repeat units lie at residues 384–423 (ADNRVAIAEAGAIPLLVGLLSTPDSRIQEHSVTALLNLSI), 425–464 (ENNKGAIVSAGAIPGIVQVLKKGSMEARENAAATLFSLSV), 466–505 (DENKVTIGALGAIPPLVVLLNEGTQRGKKDAATALFNLCI), 507–546 (QGNKGKAIRAGVIPTLTRLLTEPGSGMVDEALAILAILSS), and 548–587 (PEGKAIIGSSDAVPSLVEFIRTGSPRNRENAAAVLVHLCS). The disordered stretch occupies residues 631–660 (AEQQKETAVSQPEEEAEPTHPESTTEAADT). Over residues 651 to 660 (PESTTEAADT) the composition is skewed to polar residues.

As to quaternary structure, binds to SD11, SD16, SD17, SD18, SD113, SD129 and SD25. Post-translationally, phosphorylated by SD1-6 and SD1-7.

The protein localises to the nucleus. It localises to the cytoplasm. It catalyses the reaction S-ubiquitinyl-[E2 ubiquitin-conjugating enzyme]-L-cysteine + [acceptor protein]-L-lysine = [E2 ubiquitin-conjugating enzyme]-L-cysteine + N(6)-ubiquitinyl-[acceptor protein]-L-lysine.. Its pathway is protein modification; protein ubiquitination. In terms of biological role, functions as an E3 ubiquitin ligase. The polypeptide is U-box domain-containing protein 13 (PUB13) (Arabidopsis thaliana (Mouse-ear cress)).